Here is an 871-residue protein sequence, read N- to C-terminus: Protein translocase subunit SecA (871 aa).

ATP-binding positions include Gln-80, 98 to 102, and Asp-537; that span reads GEGKT.

Belongs to the SecA family. As to quaternary structure, monomer and homodimer. Part of the essential Sec protein translocation apparatus which comprises SecA, SecYEG and auxiliary proteins SecDF. Other proteins may also be involved.

It localises to the cell inner membrane. It is found in the cytoplasm. The enzyme catalyses ATP + H2O + cellular proteinSide 1 = ADP + phosphate + cellular proteinSide 2.. In terms of biological role, part of the Sec protein translocase complex. Interacts with the SecYEG preprotein conducting channel. Has a central role in coupling the hydrolysis of ATP to the transfer of proteins into and across the cell membrane, serving as an ATP-driven molecular motor driving the stepwise translocation of polypeptide chains across the membrane. This is Protein translocase subunit SecA from Thermotoga sp. (strain RQ2).